We begin with the raw amino-acid sequence, 280 residues long: UPF0276 protein CC_2906 (280 aa).

It belongs to the UPF0276 family.

This Caulobacter vibrioides (strain ATCC 19089 / CIP 103742 / CB 15) (Caulobacter crescentus) protein is UPF0276 protein CC_2906.